Reading from the N-terminus, the 342-residue chain is S-adenosylmethionine:tRNA ribosyltransferase-isomerase (342 aa).

This sequence belongs to the QueA family. Monomer.

It is found in the cytoplasm. It carries out the reaction 7-aminomethyl-7-carbaguanosine(34) in tRNA + S-adenosyl-L-methionine = epoxyqueuosine(34) in tRNA + adenine + L-methionine + 2 H(+). Its pathway is tRNA modification; tRNA-queuosine biosynthesis. Functionally, transfers and isomerizes the ribose moiety from AdoMet to the 7-aminomethyl group of 7-deazaguanine (preQ1-tRNA) to give epoxyqueuosine (oQ-tRNA). This is S-adenosylmethionine:tRNA ribosyltransferase-isomerase from Streptococcus agalactiae serotype V (strain ATCC BAA-611 / 2603 V/R).